Consider the following 61-residue polypeptide: Sec-independent protein translocase protein TatA (61 aa).

A helical transmembrane segment spans residues 2–22; sequence GLSGISPLSLLLILAIIVALF.

This sequence belongs to the TatA/E family. As to quaternary structure, the Tat system comprises two distinct complexes: a TatABC complex, containing multiple copies of TatA, TatB and TatC subunits, and a separate TatA complex, containing only TatA subunits. Substrates initially bind to the TatABC complex, which probably triggers association of the separate TatA complex to form the active translocon.

Its subcellular location is the cell inner membrane. Its function is as follows. Part of the twin-arginine translocation (Tat) system that transports large folded proteins containing a characteristic twin-arginine motif in their signal peptide across membranes. TatA could form the protein-conducting channel of the Tat system. The protein is Sec-independent protein translocase protein TatA of Legionella pneumophila (strain Corby).